Consider the following 223-residue polypeptide: N-terminal Xaa-Pro-Lys N-methyltransferase 1 (223 aa).

Position 1 is an N-acetylmethionine (Met1). Residue Thr2 is modified to N-acetylthreonine; in N-terminal Xaa-Pro-Lys N-methyltransferase 1, N-terminally processed. Residues Gly69, Arg74, 91 to 93 (DVT), 119 to 120 (LQ), and Gln135 contribute to the S-adenosyl-L-methionine site.

This sequence belongs to the methyltransferase superfamily. NTM1 family.

It is found in the nucleus. The enzyme catalyses N-terminal L-alanyl-L-prolyl-L-lysyl-[protein] + 3 S-adenosyl-L-methionine = N-terminal N,N,N-trimethyl-L-alanyl-L-prolyl-L-lysyl-[protein] + 3 S-adenosyl-L-homocysteine + 3 H(+). The catalysed reaction is N-terminal L-seryl-L-prolyl-L-lysyl-[protein] + 3 S-adenosyl-L-methionine = N-terminal N,N,N-trimethyl-L-seryl-L-prolyl-L-lysyl-[protein] + 3 S-adenosyl-L-homocysteine + 3 H(+). It catalyses the reaction N-terminal L-prolyl-L-prolyl-L-lysyl-[protein] + 2 S-adenosyl-L-methionine = N-terminal N,N-dimethyl-L-prolyl-L-prolyl-L-lysyl-[protein] + 2 S-adenosyl-L-homocysteine + 2 H(+). Its function is as follows. Distributive alpha-N-methyltransferase that methylates the N-terminus of target proteins containing the N-terminal motif [Ala/Gly/Pro/Ser]-Pro-Lys when the initiator Met is cleaved. Specifically catalyzes mono-, di- or tri-methylation of the exposed alpha-amino group of the Ala, Gly or Ser residue in the [Ala/Gly/Ser]-Pro-Lys motif and mono- or di-methylation of Pro in the Pro-Pro-Lys motif. Some of the substrates may be primed by NTMT2-mediated monomethylation. Catalyzes the trimethylation of the N-terminal Gly in CENPA (after removal of Met-1). Responsible for the N-terminal methylation of KLHL31, MYL2, MYL3, RB1, RCC1, RPL23A and SET. Required during mitosis for normal bipolar spindle formation and chromosome segregation via its action on RCC1. The chain is N-terminal Xaa-Pro-Lys N-methyltransferase 1 (NTMT1) from Bos taurus (Bovine).